The sequence spans 569 residues: MSLLVVGLSHRSAPVSVLERATLTADAQVKLLQDTVAAEPATEAAVLATCNRIELYADVDKFHAGVAELSTLLAQHSGVGLEELTPYLYVHYEDRAVHHLFSVACGLDSMVVGEGQILGQIKDALATAQELHTAGRLLNDLFQQALRTGKRAHSETGIDRAGQSLVTFGLEQLSAGTAVEAWAKGKRALVIGAGSMSSLAAATLARAGVAEVVIANRTPDRAERLAQILTEGDDTDVLARAVPMDAVPAELTRADVAVSCTGATGLVLTAEAVAAAVEGRTGTPVAVREETPASAAGGLAPAGTDEGCPLDLSAVQGATGFSVMGEAAVAGMDAATLEQHAAWVDRGTVDRRDSRRTPEVEAELITALAATVAAGGRLPERRRPEPVVEAPRPAPALALLDLAMPRDIDAAVHRLLGVRLVDIESLAEASADAPMAADVDLVRRIVADEVAAFGAAQRAAHITPTVVALRTMAADVVANEIARLDGRLPGLDEKQRGEITQTVRRVVDKLLHAPTVRVKQLAAEPGGAGYADALRTLFDLDPETVAAVSRADDRDTSDSTENAKNRGRE.

Residues 49 to 52 (TCNR), Ser109, 114 to 116 (EGQ), and Gln120 each bind substrate. The active-site Nucleophile is Cys50. 192-197 (GAGSMS) lines the NADP(+) pocket. An insert region spans residues 284–397 (PVAVREETPA…VEAPRPAPAL (114 aa)). The disordered stretch occupies residues 546–569 (AAVSRADDRDTSDSTENAKNRGRE). A compositionally biased stretch (basic and acidic residues) spans 550-569 (RADDRDTSDSTENAKNRGRE).

This sequence belongs to the glutamyl-tRNA reductase family. In terms of assembly, homodimer.

The catalysed reaction is (S)-4-amino-5-oxopentanoate + tRNA(Glu) + NADP(+) = L-glutamyl-tRNA(Glu) + NADPH + H(+). The protein operates within porphyrin-containing compound metabolism; protoporphyrin-IX biosynthesis; 5-aminolevulinate from L-glutamyl-tRNA(Glu): step 1/2. Its function is as follows. Catalyzes the NADPH-dependent reduction of glutamyl-tRNA(Glu) to glutamate 1-semialdehyde (GSA). The polypeptide is Glutamyl-tRNA reductase (Streptomyces avermitilis (strain ATCC 31267 / DSM 46492 / JCM 5070 / NBRC 14893 / NCIMB 12804 / NRRL 8165 / MA-4680)).